Reading from the N-terminus, the 566-residue chain is MEIKHKKNRSLYIPYAGPVLLEFPLLNKGSAFSMEERSNFNLLGLLPEVVETIEEQAERAWRQFEDFKTDIDKHIYLRNIQDTNETLFYRLLENHLEVMMPIIYTPTVGSACERFSEIYRRARGVFISWPNRHNMDDILQNVPIHNIKVIVVTDGERILGLGDQGIGGMGIPIGKLSLYTACGGISPAYTLPIVLDVGTNNQQLLNDPLYMGWRHPRITDDEYYAFVDDFIQAVKQRWPNVLLQFEDFAQKNAMPLLERYRDEICCFNDDIQGTAAVTLGTLIAASRAAGSQLSEQKIVFLGAGSAGCGIAEQIIAWMRTEGGLSDEQARARVFMVDRFGLLTDNMPNLLSFQSKLVQKRDSLKGWDTQSDSISLLDVVRNAKPDILIGVSGQTGLFTEEIIREMHKHCARPIVMPLSNPTSRVEATPHDILNWTDGAALVATGSPFQPVTVKEKTYPIAQCNNAYIFPGIGLGIISSGALRVTDEMMMAASEALASHSPLVNTGSGLVLPPLTDIQQVSKDIAFAVGKMAQQQGVAVKTSAEALLQAIEENFWLPEYRSYRRTSI.

Tyr104 (proton donor) is an active-site residue. Residue Arg157 coordinates NAD(+). Lys175 (proton acceptor) is an active-site residue. A divalent metal cation is bound by residues Glu246, Asp247, and Asp270. Residues Asp270 and Asn419 each contribute to the NAD(+) site.

It belongs to the malic enzymes family. As to quaternary structure, homotetramer. Requires Mg(2+) as cofactor. Mn(2+) serves as cofactor.

It carries out the reaction (S)-malate + NAD(+) = pyruvate + CO2 + NADH. It catalyses the reaction oxaloacetate + H(+) = pyruvate + CO2. The sequence is that of NAD-dependent malic enzyme from Cronobacter sakazakii (strain ATCC BAA-894) (Enterobacter sakazakii).